Here is a 155-residue protein sequence, read N- to C-terminus: Fibroblast growth factor 1 (155 aa).

The propeptide occupies 1–15; that stretch reads MAEGDITTFNAITES. Heparin is bound at residue N33. A heparin-binding region spans residues 127-143; the sequence is KKNGASKKGSRTHYGQK.

This sequence belongs to the heparin-binding growth factors family.

It is found in the secreted. It localises to the cytoplasm. The protein resides in the cell cortex. Its subcellular location is the cytosol. The protein localises to the nucleus. Functionally, plays an important role in the regulation of cell survival, cell division, angiogenesis, cell differentiation and cell migration. Functions as a potent mitogen in vitro. Acts as a ligand for FGFR1 and integrins. Binds to FGFR1 in the presence of heparin leading to FGFR1 dimerization and activation via sequential autophosphorylation on tyrosine residues which act as docking sites for interacting proteins, leading to the activation of several signaling cascades. Binds to integrins. Its binding to integrins and subsequent ternary complex formation with integrins and FGFR1 are essential for FGF1 signaling. In Xenopus laevis (African clawed frog), this protein is Fibroblast growth factor 1 (fgf1).